Reading from the N-terminus, the 296-residue chain is Protoheme IX farnesyltransferase 1 (296 aa).

A run of 8 helical transmembrane segments spans residues 14–34, 41–61, 86–106, 108–128, 141–161, 165–185, 230–250, and 274–294; these read IVLLLVITAVTTMYAGDALSA, LWDYAHLMAAGALASAGSSAL, IGENIVLAYGLAISSAAVVYA, FLLNAPTAFFIALGIFSYVII, IVIGGIAGSAASWAGWTAATG, LLGFLIGFLVFVWTPSHFWCL, AFGMGLVYLVIAVASGGLMLV, and YLTIIFAAVALDAAFHYPFPF.

This sequence belongs to the UbiA prenyltransferase family. Protoheme IX farnesyltransferase subfamily.

It localises to the cell membrane. It carries out the reaction heme b + (2E,6E)-farnesyl diphosphate + H2O = Fe(II)-heme o + diphosphate. Its pathway is porphyrin-containing compound metabolism; heme O biosynthesis; heme O from protoheme: step 1/1. Converts heme B (protoheme IX) to heme O by substitution of the vinyl group on carbon 2 of heme B porphyrin ring with a hydroxyethyl farnesyl side group. The polypeptide is Protoheme IX farnesyltransferase 1 (Cenarchaeum symbiosum (strain A)).